Consider the following 116-residue polypeptide: Large ribosomal subunit protein bL19 (116 aa).

This sequence belongs to the bacterial ribosomal protein bL19 family.

Its function is as follows. This protein is located at the 30S-50S ribosomal subunit interface and may play a role in the structure and function of the aminoacyl-tRNA binding site. The chain is Large ribosomal subunit protein bL19 from Staphylococcus carnosus (strain TM300).